The primary structure comprises 236 residues: Thioredoxin-like 2-2, chloroplastic (236 aa).

A chloroplast-targeting transit peptide spans 1–82 (MAGVVRLTTT…LRRPKSQVVR (82 aa)). In terms of domain architecture, Thioredoxin spans 83-220 (VKVDENVAET…QLELGITLQT (138 aa)). Active-site nucleophile residues include Cys-135 and Cys-138. Cys-135 and Cys-138 are oxidised to a cystine.

This sequence belongs to the thioredoxin family.

The protein resides in the plastid. Its subcellular location is the chloroplast. Its function is as follows. Thiol-disulfide oxidoreductase that may participate in various redox reactions. Possesses insulin disulfide bonds reducing activity. The protein is Thioredoxin-like 2-2, chloroplastic of Arabidopsis thaliana (Mouse-ear cress).